The chain runs to 97 residues: Peptide YY (97 aa).

The first 28 residues, 1 to 28 (MVFVRRPWPALTTVLLALLVCLGALVDA), serve as a signal peptide directing secretion. The residue at position 41 (S41) is a Phosphoserine. Residue Y64 is modified to Tyrosine amide. Positions 65 to 97 (GKRDGPDTLLSKTFFPDGEDRPVRSRSEGPDLW) are disordered. A propeptide spanning residues 68-97 (DGPDTLLSKTFFPDGEDRPVRSRSEGPDLW) is cleaved from the precursor. Positions 82 to 97 (GEDRPVRSRSEGPDLW) are enriched in basic and acidic residues.

This sequence belongs to the NPY family. Post-translationally, the peptide YY form is cleaved at Pro-30 by the prolyl endopeptidase FAP (seprase) activity (in vitro) to generate peptide YY(3-36).

It is found in the secreted. In terms of biological role, this gut peptide inhibits exocrine pancreatic secretion, has a vasoconstrictory action and inhibitis jejunal and colonic mobility. The sequence is that of Peptide YY (PYY) from Homo sapiens (Human).